The chain runs to 710 residues: Serine/threonine-protein phosphatase PP-Z2 (710 aa).

Residues 1–382 (MGNSGSKQHT…ADGDNGSRTN (382 aa)) are disordered. The N-myristoyl glycine moiety is linked to residue G2. The segment covering 15-27 (KKDDHDGDRKKTL) has biased composition (basic and acidic residues). Residues 40-49 (SLKSSRSLRS) are compositionally biased toward low complexity. A phosphoserine mark is found at S55 and S71. Composition is skewed to polar residues over residues 62–77 (NVQA…SSTL) and 95–104 (PNNHYLTSHP). 2 stretches are compositionally biased toward low complexity: residues 105 to 125 (SSSR…NNNS) and 143 to 155 (NSTS…SFNS). Acidic residues predominate over residues 160–172 (LTDDDDDRGDDGG). At T161 the chain carries Phosphothreonine. Phosphoserine is present on residues S203 and S224. Residues 247–260 (SNRSNSHASSRKSS) show a composition bias toward low complexity. Positions 261–273 (FGSTGNTAYSTPL) are enriched in polar residues. T271 is subject to Phosphothreonine. S275 is modified (phosphoserine). Over residues 291-302 (DNVNGRGTSPIP) the composition is skewed to polar residues. The residue at position 310 (S310) is a Phosphoserine. The Mn(2+) site is built by D454, H456, D482, and N514. Catalysis depends on H515, which acts as the Proton donor. The Mn(2+) site is built by H563 and H638.

This sequence belongs to the PPP phosphatase family. PP-Z subfamily. The cofactor is Mn(2+).

It carries out the reaction O-phospho-L-seryl-[protein] + H2O = L-seryl-[protein] + phosphate. It catalyses the reaction O-phospho-L-threonyl-[protein] + H2O = L-threonyl-[protein] + phosphate. Essential for the maintenance of cell size and integrity in response to osmotic stress. This is Serine/threonine-protein phosphatase PP-Z2 (PPZ2) from Saccharomyces cerevisiae (strain ATCC 204508 / S288c) (Baker's yeast).